Reading from the N-terminus, the 355-residue chain is UDP-3-O-acylglucosamine N-acyltransferase (355 aa).

His252 acts as the Proton acceptor in catalysis.

It belongs to the transferase hexapeptide repeat family. LpxD subfamily. As to quaternary structure, homotrimer.

The enzyme catalyses a UDP-3-O-[(3R)-3-hydroxyacyl]-alpha-D-glucosamine + a (3R)-hydroxyacyl-[ACP] = a UDP-2-N,3-O-bis[(3R)-3-hydroxyacyl]-alpha-D-glucosamine + holo-[ACP] + H(+). The protein operates within bacterial outer membrane biogenesis; LPS lipid A biosynthesis. Catalyzes the N-acylation of UDP-3-O-acylglucosamine using 3-hydroxyacyl-ACP as the acyl donor. Is involved in the biosynthesis of lipid A, a phosphorylated glycolipid that anchors the lipopolysaccharide to the outer membrane of the cell. This chain is UDP-3-O-acylglucosamine N-acyltransferase, found in Polynucleobacter necessarius subsp. necessarius (strain STIR1).